Here is a 243-residue protein sequence, read N- to C-terminus: Probable fructoselysine utilization operon transcriptional repressor (243 aa).

The region spanning 10–78 (QLLYATVRQR…QGKGTFVQSQ (69 aa)) is the HTH gntR-type domain. Residues 38–57 (ENELCTQYNVSRITIRKAIS) constitute a DNA-binding region (H-T-H motif).

It functions in the pathway carbohydrate metabolism; fructoselysine degradation [regulation]. Its function is as follows. May regulate the transcription of the frlABCDR operon, involved in the utilization of fructoselysine and psicoselysine. The polypeptide is Probable fructoselysine utilization operon transcriptional repressor (Escherichia coli (strain K12)).